We begin with the raw amino-acid sequence, 538 residues long: Putative outer membrane porin BglH (538 aa).

The first 25 residues, 1 to 25, serve as a signal peptide directing secretion; it reads MFRRNLITSAILLMAPLAFSAQSLA. The tract at residues 52–82 is disordered; that stretch reads KDEEKKKYTPATVNRSVSTNDQGYAANPFPT. Polar residues predominate over residues 62–73; it reads ATVNRSVSTNDQ.

Belongs to the porin LamB (TC 1.B.3) family.

The protein resides in the cell outer membrane. In terms of biological role, may be a sugar porin with a broad carbohydrate specificity. The protein is Putative outer membrane porin BglH (bglH) of Shigella sonnei (strain Ss046).